Reading from the N-terminus, the 1483-residue chain is Cystic fibrosis transmembrane conductance regulator (1483 aa).

At 1-77 (MQRSPLEKAS…KLINALRRCF (77 aa)) the chain is on the cytoplasmic side. The helical transmembrane segment at 78 to 98 (FWRFAFYGILLYLGEVTKAVQ) threads the bilayer. The region spanning 81–365 (FAFYGILLYL…WAVQTWYDSL (285 aa)) is the ABC transmembrane type-1 1 domain. The Extracellular portion of the chain corresponds to 99–122 (PLLLGRIIASYDPDNKQERSIAIY). A helical membrane pass occupies residues 123–146 (LAIGLCLLFIMRPLLLHPAIFGLH). Residues 147–195 (HIGMQIRIAMFSLIYKKTLKLSSRVLDKISIGQLVSLLSNNLNKFDEGL) lie on the Cytoplasmic side of the membrane. Residues 196 to 216 (ALAHFVWIAPLQVTLLMGLLW) form a helical membrane-spanning segment. The Extracellular segment spans residues 217–222 (DLLQAS). Residues 223–243 (AFCGLAFLIVLALVQAGLGRM) form a helical membrane-spanning segment. At 244 to 298 (IMKYRDQRAGKINERLVITSEVIENIQSVKAYCWEEAMEKIIENIRQTELKLTRK) the chain is on the cytoplasmic side. Residues 299–319 (AAHVRYFNSSAFFFSGFFVVS) form a helical membrane-spanning segment. Residues 320–339 (LSVLPYALIKTIILRKIFTT) lie on the Extracellular side of the membrane. Residues 340–358 (ISFCIVLRMAVTRQFPWAV) form a helical membrane-spanning segment. Over 359 to 859 (QTWYDSLGAI…YLRYITVHKN (501 aa)) the chain is Cytoplasmic. ATP-binding positions include tryptophan 401, serine 434, 458–465 (GSTGAGKT), and glutamine 493. Residues 423-646 (NGDNSLFFSN…RPDFSSKLMG (224 aa)) enclose the ABC transporter 1 domain. The S-palmitoyl cysteine moiety is linked to residue cysteine 524. 2 positions are modified to phosphoserine: serine 549 and serine 660. Residues 654-832 (SPERRNSIIT…EEINEEDLKE (179 aa)) form a disordered R region region. A Phosphoserine; by PKA modification is found at serine 670. Serine 686 is subject to Phosphoserine. Residue lysine 688 forms a Glycyl lysine isopeptide (Lys-Gly) (interchain with G-Cter in ubiquitin) linkage. Residues serine 700 and serine 712 each carry the phosphoserine modification. Residue threonine 717 is modified to Phosphothreonine. Residues serine 737, serine 768, serine 791, serine 796, and serine 814 each carry the phosphoserine modification. The helical transmembrane segment at 860 to 880 (LIFVLIWCLVIFLAEVAVSLV) threads the bilayer. One can recognise an ABC transmembrane type-1 2 domain in the interval 860 to 1156 (LIFVLIWCLV…AVNSSIEVDS (297 aa)). Over 881–919 (VLWILRNLSSQDKGNSTQSVNSSYAVIFTSTSAYYIFYI) the chain is Extracellular. Asparagine 887, asparagine 895, and asparagine 901 each carry an N-linked (GlcNAc...) asparagine glycan. The chain crosses the membrane as a discontinuously helical span at residues 920-940 (YVGVADTLLALGLFRGLPLVH). Residues 941–991 (TLITVSKILHHKMLHSVLQAPMSTLNTLKAGGILNRFSKDIAILDDLLPLT) are Cytoplasmic-facing. Residues 992–1012 (IFDFIQLLLIVIGAVAVVSVL) traverse the membrane as a helical segment. The Extracellular segment spans residues 1013–1014 (QP). The helical transmembrane segment at 1015–1035 (YIFLATVPVIAAFIILRAYFL) threads the bilayer. Topologically, residues 1036–1096 (HTSQQLKQLE…TANWFLYLST (61 aa)) are cytoplasmic. A helical transmembrane segment spans residues 1097 to 1117 (LRWFQMRMEIIFVIFFIAVTF). At 1118–1131 (ISILTTGEGEGTVG) the chain is on the extracellular side. A helical membrane pass occupies residues 1132–1152 (IILTLAMNIMGTLQWAVNSSI). The Cytoplasmic portion of the chain corresponds to 1153-1483 (EVDSLMRSVS…TEDEVQDTRL (331 aa)). The ABC transporter 2 domain maps to 1213–1446 (MTVKDLTAKY…RSAFRQAIGP (234 aa)). Residues tyrosine 1222 and 1247-1254 (GRTGSGKS) contribute to the ATP site. The interval 1389–1483 (RTLKQAFADC…TEDEVQDTRL (95 aa)) is interaction with GORASP2. A lipid anchor (S-palmitoyl cysteine) is attached at cysteine 1398. Positions 1444 to 1483 (IGPPERPGLLPHRLSSRQRSPSRIAALKEETEDEVQDTRL) are disordered. Serine 1459 is subject to Phosphoserine. Acidic residues predominate over residues 1473-1483 (ETEDEVQDTRL). A PDZ-binding motif is present at residues 1481-1483 (TRL).

It belongs to the ABC transporter superfamily. ABCC family. CFTR transporter (TC 3.A.1.202) subfamily. In terms of assembly, monomer; does not require oligomerization for channel activity. May form oligomers in the membrane. Interacts with SLC26A3, SLC26A6 and NHERF1. Interacts with SHANK2. Interacts with MYO6. Interacts (via C-terminus) with GOPC (via PDZ domain); this promotes CFTR internalization and thereby decreases channel activity. Interacts with SLC4A7 through NHERF1. Found in a complex with MYO5B and RAB11A. Interacts with ANO1. Interacts with SLC26A8. Interacts with AHCYL1; the interaction increases CFTR activity. Interacts with CSE1L. The core-glycosylated form interacts with GORASP2 (via PDZ GRASP-type 1 domain) in respone to ER stress. Interacts with MARCHF2; the interaction leads to CFTR ubiqtuitination and degradation. Interacts with ADGRG2. Post-translationally, N-glycosylated. Phosphorylated; cAMP treatment promotes phosphorylation and activates the channel. Dephosphorylation decreases the ATPase activity (in vitro). Phosphorylation at PKA sites activates the channel. Phosphorylation at PKC sites enhances the response to phosphorylation by PKA. Phosphorylated by AMPK; this inhibits channel activity. In terms of processing, ubiquitinated, leading to its degradation in the lysosome. Deubiquitination by USP10 in early endosomes enhances its endocytic recycling to the cell membrane. Ubiquitinated by RNF185 during ER stress. Ubiquitinated by MARCHF2.

It is found in the apical cell membrane. The protein resides in the early endosome membrane. It localises to the cell membrane. The protein localises to the recycling endosome membrane. Its subcellular location is the endoplasmic reticulum membrane. It is found in the nucleus. The enzyme catalyses ATP + H2O + closed Cl(-) channel = ADP + phosphate + open Cl(-) channel.. It catalyses the reaction chloride(in) = chloride(out). It carries out the reaction hydrogencarbonate(in) = hydrogencarbonate(out). The catalysed reaction is ATP + H2O = ADP + phosphate + H(+). In terms of biological role, epithelial ion channel that plays an important role in the regulation of epithelial ion and water transport and fluid homeostasis. Mediates the transport of chloride ions across the cell membrane. Possesses an intrinsic ATPase activity and utilizes ATP to gate its channel; the passive flow of anions through the channel is gated by cycles of ATP binding and hydrolysis by the ATP-binding domains. The ion channel is also permeable to HCO(3)(-); selectivity depends on the extracellular chloride concentration. Exerts its function also by modulating the activity of other ion channels and transporters. Contributes to the regulation of the pH and the ion content of the epithelial fluid layer. Modulates the activity of the epithelial sodium channel (ENaC) complex, in part by regulating the cell surface expression of the ENaC complex. May regulate bicarbonate secretion and salvage in epithelial cells by regulating the transporter SLC4A7. Can inhibit the chloride channel activity of ANO1. Plays a role in the chloride and bicarbonate homeostasis during sperm epididymal maturation and capacitation. This Canis lupus familiaris (Dog) protein is Cystic fibrosis transmembrane conductance regulator.